The following is a 107-amino-acid chain: MTDNPWLIMMINMTIVFGVLIVLGILMVLIHAVDPTKKVQGKKKPVVAKPAPSAAASKRQEEEKVAAMAAVLALVQDEDDMIAAALSAAIAEHKRKMEPMNLPHHSF.

The chain crosses the membrane as a helical span at residues 10 to 32; that stretch reads MINMTIVFGVLIVLGILMVLIHA. Residues 37-60 form a disordered region; it reads KKVQGKKKPVVAKPAPSAAASKRQ. Residues 47–57 are compositionally biased toward low complexity; that stretch reads VAKPAPSAAAS.

This sequence belongs to the OadG family. As to quaternary structure, heterooctamer consisting of two alpha, two beta, two gamma and two delta subunits.

The protein localises to the cell membrane. The catalysed reaction is (2E)-glutaconyl-CoA + Na(+)(in) + H(+) = (2E)-butenoyl-CoA + Na(+)(out) + CO2. It participates in amino-acid degradation; L-glutamate degradation via hydroxyglutarate pathway; crotonoyl-CoA from L-glutamate: step 5/5. In terms of biological role, part of the primary sodium pump glutaconyl-CoA decarboxylase (GCD). Possible membrane anchor for the alpha subunit. The polypeptide is Glutaconyl-CoA decarboxylase subunit delta (gcdD) (Acidaminococcus fermentans (strain ATCC 25085 / DSM 20731 / CCUG 9996 / CIP 106432 / VR4)).